We begin with the raw amino-acid sequence, 102 residues long: Large ribosomal subunit protein bL21 (102 aa).

This sequence belongs to the bacterial ribosomal protein bL21 family. As to quaternary structure, part of the 50S ribosomal subunit. Contacts protein L20.

Functionally, this protein binds to 23S rRNA in the presence of protein L20. The protein is Large ribosomal subunit protein bL21 of Onion yellows phytoplasma (strain OY-M).